The chain runs to 144 residues: Large ribosomal subunit protein uL13 (144 aa).

Belongs to the universal ribosomal protein uL13 family. In terms of assembly, part of the 50S ribosomal subunit.

This protein is one of the early assembly proteins of the 50S ribosomal subunit, although it is not seen to bind rRNA by itself. It is important during the early stages of 50S assembly. This chain is Large ribosomal subunit protein uL13, found in Blochmanniella pennsylvanica (strain BPEN).